Reading from the N-terminus, the 520-residue chain is Na(+)/H(+) antiporter NhaB (520 aa).

The next 12 membrane-spanning stretches (helical) occupy residues 27–49 (GFLI…LLVI), 62–82 (YPLL…MTSA), 97–117 (LLLI…LLIF), 120–140 (LLLG…AAAF), 144–164 (FLDA…FYGI), 202–222 (LMMH…VGEP), 238–258 (FLLR…VTCI), 303–323 (GLIG…VGLI), 348–368 (TEAL…AVII), 391–411 (LFYL…VGTV), 447–467 (ATPN…APLI), and 475–495 (VWMA…CVQF).

The protein belongs to the NhaB Na(+)/H(+) (TC 2.A.34) antiporter family.

The protein resides in the cell inner membrane. The catalysed reaction is 2 Na(+)(in) + 3 H(+)(out) = 2 Na(+)(out) + 3 H(+)(in). In terms of biological role, na(+)/H(+) antiporter that extrudes sodium in exchange for external protons. The chain is Na(+)/H(+) antiporter NhaB from Cronobacter sakazakii (strain ATCC BAA-894) (Enterobacter sakazakii).